A 254-amino-acid polypeptide reads, in one-letter code: Triosephosphate isomerase (254 aa).

9-11 (NWK) contacts substrate. Histidine 95 functions as the Electrophile in the catalytic mechanism. The Proton acceptor role is filled by glutamate 167. Substrate is bound by residues glycine 173, serine 213, and 234–235 (GG).

Belongs to the triosephosphate isomerase family. As to quaternary structure, homodimer.

The protein localises to the cytoplasm. It catalyses the reaction D-glyceraldehyde 3-phosphate = dihydroxyacetone phosphate. Its pathway is carbohydrate biosynthesis; gluconeogenesis. It functions in the pathway carbohydrate degradation; glycolysis; D-glyceraldehyde 3-phosphate from glycerone phosphate: step 1/1. Involved in the gluconeogenesis. Catalyzes stereospecifically the conversion of dihydroxyacetone phosphate (DHAP) to D-glyceraldehyde-3-phosphate (G3P). This chain is Triosephosphate isomerase, found in Roseiflexus sp. (strain RS-1).